The chain runs to 1342 residues: DNA-directed RNA polymerase subunit beta (1342 aa).

It belongs to the RNA polymerase beta chain family. In terms of assembly, the RNAP catalytic core consists of 2 alpha, 1 beta, 1 beta' and 1 omega subunit. When a sigma factor is associated with the core the holoenzyme is formed, which can initiate transcription.

The enzyme catalyses RNA(n) + a ribonucleoside 5'-triphosphate = RNA(n+1) + diphosphate. DNA-dependent RNA polymerase catalyzes the transcription of DNA into RNA using the four ribonucleoside triphosphates as substrates. This is DNA-directed RNA polymerase subunit beta from Vibrio campbellii (strain ATCC BAA-1116).